The following is a 662-amino-acid chain: Interferon-induced GTP-binding protein Mx1 (662 aa).

Residue M1 is modified to N-acetylmethionine. Positions 67–340 constitute a Dynamin-type G domain; it reads DLALPAIAVI…LITHICKSLP (274 aa). The G1 motif stretch occupies residues 77–84; the sequence is GDQSSGKS. 77–84 contributes to the GTP binding site; it reads GDQSSGKS. A G2 motif region spans residues 102–104; that stretch reads VTR. The tract at residues 178–181 is G3 motif; it reads DLPG. GTP-binding positions include 178 to 182 and 247 to 250; these read DLPGI and TKPD. Residues 247–250 form a G4 motif region; it reads TKPD. Positions 279–282 are G5 motif; that stretch reads KCRG. The tract at residues 341–366 is bundle signaling element (BSE); the sequence is LLENQIRESHQRITEELQKYGVDVPE. Residues 366 to 533 form a middle domain region; the sequence is EDENEKMFFL…HFQMEQIVYC (168 aa). The tract at residues 367–632 is stalk; the sequence is DENEKMFFLI…KDTYSWLLKE (266 aa). Residues 554 to 557 form a critical for lipid-binding region; sequence KKKK. A GED domain is found at 574–662; the sequence is MEEIFQHLMA…ARRRLAQFPG (89 aa).

Belongs to the TRAFAC class dynamin-like GTPase superfamily. Dynamin/Fzo/YdjA family. As to quaternary structure, homooligomer. Oligomerizes into multimeric filamentous or ring-like structures by virtue of its stalk domain. Oligomerization is critical for GTPase activity, protein stability, and recognition of viral target structures. Interacts with TRPC1, TRPC3, TRPC4, TRPC5, TRPC6 and TRPC7. Interacts with HSPA5. Interacts with TUBB/TUBB5. Interacts with DDX39A and DDX39B. Post-translationally, ISGylated.

The protein resides in the cytoplasm. It is found in the endoplasmic reticulum membrane. The protein localises to the perinuclear region. Interferon-induced dynamin-like GTPase with antiviral activity. The polypeptide is Interferon-induced GTP-binding protein Mx1 (MX1) (Pongo abelii (Sumatran orangutan)).